Consider the following 1261-residue polypeptide: Myosin-1 (1261 aa).

Residues 1-39 (MGHSRRPVGGEKKSRGFGRSKVADVGDGRQAGKPQVKKA) form a disordered region. Positions 49–728 (IGVSDLTLLS…TLFALEAMRD (680 aa)) constitute a Myosin motor domain. Position 142–149 (142–149 (GESGAGKT)) interacts with ATP. Ser370 carries the post-translational modification Phosphoserine. The interval 417–499 (SIGILDIYGF…PGVFAALNDA (83 aa)) is actin-binding. IQ domains are found at residues 732–752 (HNMA…RIEC) and 753–778 (AIRI…QGHQ). Residues 786-973 (RRRMSLLGSR…KSHTIHTSPG (188 aa)) enclose the TH1 domain. Disordered regions lie at residues 956–1093 (ASPN…KALY) and 1139–1261 (YLEE…DDEW). Composition is skewed to pro residues over residues 1019–1029 (RPTPKPQPLPQ), 1038–1052 (IPAP…PVPQ), 1072–1084 (APPP…PPAP), and 1147–1159 (TPKP…PPAA). The region spanning 1084 to 1145 (PKKATAKALY…PQAYLEEQVA (62 aa)) is the SH3 domain. Low complexity predominate over residues 1160–1181 (PRASPVPSANGAAATAAAAKAK). Over residues 1212–1233 (VSMNSQDSSGGSGRGTPNSTSN) the composition is skewed to polar residues. Residues 1234–1243 (ASLAGGLAEA) are compositionally biased toward low complexity.

This sequence belongs to the TRAFAC class myosin-kinesin ATPase superfamily. Myosin family. Post-translationally, phosphorylation of the TEDS site (Ser-370) is required for the polarization of the actin cytoskeleton. Phosphorylation probably activates the myosin-I ATPase activity.

It is found in the cytoplasm. Its subcellular location is the cytoskeleton. The protein localises to the actin patch. Functionally, type-I myosin implicated in the organization of the actin cytoskeleton. Required for proper actin cytoskeleton polarization. At the cell cortex, assembles in patch-like structures together with proteins from the actin-polymerizing machinery and promotes actin assembly. Functions as actin nucleation-promoting factor (NPF) for the Arp2/3 complex. Plays an important role in polarized growth, spore germination, hyphal morphogenesis, and septal wall formation. The protein is Myosin-1 (myoA) of Aspergillus oryzae (strain ATCC 42149 / RIB 40) (Yellow koji mold).